The chain runs to 153 residues: Superoxide dismutase [Cu-Zn] (153 aa).

Histidine 45, histidine 47, and histidine 62 together coordinate Cu cation. A disulfide bond links cysteine 56 and cysteine 145. The Zn(2+) site is built by histidine 62, histidine 70, histidine 79, and aspartate 82. Histidine 119 is a binding site for Cu cation.

It belongs to the Cu-Zn superoxide dismutase family. In terms of assembly, homodimer. The cofactor is Cu cation. Zn(2+) serves as cofactor.

The protein resides in the cytoplasm. It carries out the reaction 2 superoxide + 2 H(+) = H2O2 + O2. In terms of biological role, destroys radicals which are normally produced within the cells and which are toxic to biological systems. This is Superoxide dismutase [Cu-Zn] from Drosophila yakuba (Fruit fly).